The following is a 1390-amino-acid chain: DNA-directed RNA polymerase subunit beta'' (1390 aa).

Zn(2+)-binding residues include Cys-224, Cys-295, Cys-302, and Cys-305.

This sequence belongs to the RNA polymerase beta' chain family. RpoC2 subfamily. In plastids the minimal PEP RNA polymerase catalytic core is composed of four subunits: alpha, beta, beta', and beta''. When a (nuclear-encoded) sigma factor is associated with the core the holoenzyme is formed, which can initiate transcription. It depends on Zn(2+) as a cofactor.

The protein localises to the plastid. The protein resides in the chloroplast. It catalyses the reaction RNA(n) + a ribonucleoside 5'-triphosphate = RNA(n+1) + diphosphate. Its function is as follows. DNA-dependent RNA polymerase catalyzes the transcription of DNA into RNA using the four ribonucleoside triphosphates as substrates. The polypeptide is DNA-directed RNA polymerase subunit beta'' (Daucus carota (Wild carrot)).